Reading from the N-terminus, the 238-residue chain is MCTLEKRGDLFLLTLTGEDEHRFHPDTIASVLSLLEQAKSQSTKGSVLITTGHGKFFSNGFDLAWAQSAGHGAIKRMHQMVKSFKPVLAALLDLPMPTIAALNGHAAASGLMFALSHDYVFMRKDRGVLYMSEVDIGLPVPDYFSALVVAKVGSGIARRELLLSGKKLKGEEAVALGIVDSAAHDSAEGVVEATVSLGESLAAKKWNGEVYATIRKSLYPELCRMVDLTANNLATHNL.

It belongs to the enoyl-CoA hydratase/isomerase family.

It localises to the cytoplasm. The protein resides in the nucleus. It carries out the reaction a (3Z)-enoyl-CoA = a 4-saturated (2E)-enoyl-CoA. The catalysed reaction is a (3E)-enoyl-CoA = a 4-saturated (2E)-enoyl-CoA. Its pathway is lipid metabolism; fatty acid beta-oxidation. In terms of biological role, able to isomerize both 3-cis and 3-trans double bonds into the 2-trans form in a range of enoyl-CoA species. Essential for the beta oxidation of unsaturated fatty acids. The chain is Enoyl-CoA delta isomerase 3 from Arabidopsis thaliana (Mouse-ear cress).